Reading from the N-terminus, the 279-residue chain is MSSAIESWADAGDEFSVPADIIQNPDGTKTVITFRTNQDGKKVKITQKIKEVIVREKVHPLIAQRKNWAKYGKEKHSSPGPDTSTTQLGEKVDLKLGLSWKQVEKKEEEDKAQERASRVVVQTIKCRVCGGDHYTAKCPFKDTLGASTLNGGTPEPGSEGAGDADAVTSTGRYIPRHLRPDANGNIPTREARDDSTTLKVSQLNTFVDEDMLRNELFARFGPLQRVTVVRDRETGESRGFAYVSFATEEIAQKALDLLNGKGYHSLILHLEWSKKKKPL.

Disordered regions lie at residues 69–90 (AKYG…QLGE) and 149–193 (LNGG…EARD). At Ser77 the chain carries Phosphoserine. The 80-residue stretch at 196-275 (TTLKVSQLNT…LILHLEWSKK (80 aa)) folds into the RRM domain.

This sequence belongs to the eIF-3 subunit G family. As to quaternary structure, component of the eukaryotic translation initiation factor 3 (eIF-3) complex.

It localises to the cytoplasm. In terms of biological role, RNA-binding component of the eukaryotic translation initiation factor 3 (eIF-3) complex, which is involved in protein synthesis of a specialized repertoire of mRNAs and, together with other initiation factors, stimulates binding of mRNA and methionyl-tRNAi to the 40S ribosome. The eIF-3 complex specifically targets and initiates translation of a subset of mRNAs involved in cell proliferation. This subunit can bind 18S rRNA. This is Eukaryotic translation initiation factor 3 subunit G from Lodderomyces elongisporus (strain ATCC 11503 / CBS 2605 / JCM 1781 / NBRC 1676 / NRRL YB-4239) (Yeast).